Here is an 853-residue protein sequence, read N- to C-terminus: Leucine--tRNA ligase (853 aa).

The 'HIGH' region signature appears at 40–50 (PYPSGKMHMGH). Positions 609 to 613 (KMSKS) match the 'KMSKS' region motif. Lys612 provides a ligand contact to ATP.

It belongs to the class-I aminoacyl-tRNA synthetase family.

Its subcellular location is the cytoplasm. It catalyses the reaction tRNA(Leu) + L-leucine + ATP = L-leucyl-tRNA(Leu) + AMP + diphosphate. The chain is Leucine--tRNA ligase from Brachyspira hyodysenteriae (strain ATCC 49526 / WA1).